A 967-amino-acid polypeptide reads, in one-letter code: Serine/threonine-protein kinase/endoribonuclease ire-1 (967 aa).

Positions methionine 1–cysteine 21 are cleaved as a signal peptide. Topologically, residues isoleucine 22 to proline 438 are lumenal. N-linked (GlcNAc...) asparagine glycosylation is found at asparagine 100 and asparagine 188. A helical transmembrane segment spans residues phenylalanine 439–tryptophan 455. The Cytoplasmic segment spans residues glutamine 456–aspartate 967. Residues glutamate 474–glycine 494 form a disordered region. Positions proline 479 to glycine 494 are enriched in polar residues. A Protein kinase domain is found at tyrosine 518–phenylalanine 778. ATP contacts are provided by residues leucine 524 to valine 532 and lysine 546. Aspartate 636 (proton acceptor) is an active-site residue. Serine 672 carries the phosphoserine; by autocatalysis modification. A KEN domain is found at serine 781 to aspartate 909. Residues arginine 948–aspartate 967 form a disordered region. Residues asparagine 957–aspartate 967 are compositionally biased toward basic residues.

Belongs to the protein kinase superfamily. Ser/Thr protein kinase family. Mg(2+) serves as cofactor. Post-translationally, autophosphorylated mainly on serine residues.

The protein localises to the endoplasmic reticulum membrane. The catalysed reaction is L-seryl-[protein] + ATP = O-phospho-L-seryl-[protein] + ADP + H(+). The enzyme catalyses L-threonyl-[protein] + ATP = O-phospho-L-threonyl-[protein] + ADP + H(+). With respect to regulation, the kinase domain is activated by trans-autophosphorylation. Kinase activity is required for activation of the endoribonuclease domain. Functionally, senses unfolded proteins in the lumen of the endoplasmic reticulum via its N-terminal domain which leads to enzyme auto-activation. The active endoribonuclease domain splices xbp-1 precursor mRNA to produce the mature form which then induces transcription of UPR target genes. Unfolded protein response (UPR) transcriptional activation by ire-1, as well as translational attenuation by pek-1 in a complementary pathway, maintains ER homeostasis. Regulates the transcriptional up-regulation of nucleoside-diphosphatase apy-1 and many other genes, upon ER stress. By activating the UPR pathway during non-lethal hypoxia pre-conditioning, confers adaptive protection to subsequent exposure to hypoxia. ire-1 and pek-1 are redundant genes that control a pathway essential for larval development and survival. Plays a role in the nuclear retention of unspliced mRNAs. The sequence is that of Serine/threonine-protein kinase/endoribonuclease ire-1 from Caenorhabditis elegans.